The chain runs to 143 residues: Heat shock protein Hsp-16.48/Hsp-16.49 (143 aa).

The sHSP domain maps to 35–140 (HNSFNFSDNI…SSRSIPINFV (106 aa)).

Belongs to the small heat shock protein (HSP20) family.

In Caenorhabditis elegans, this protein is Heat shock protein Hsp-16.48/Hsp-16.49 (hsp-16.48).